The primary structure comprises 101 residues: Urease subunit beta (101 aa).

This sequence belongs to the urease beta subunit family. Heterotrimer of UreA (gamma), UreB (beta) and UreC (alpha) subunits. Three heterotrimers associate to form the active enzyme.

The protein resides in the cytoplasm. The catalysed reaction is urea + 2 H2O + H(+) = hydrogencarbonate + 2 NH4(+). It functions in the pathway nitrogen metabolism; urea degradation; CO(2) and NH(3) from urea (urease route): step 1/1. This Saccharophagus degradans (strain 2-40 / ATCC 43961 / DSM 17024) protein is Urease subunit beta.